Reading from the N-terminus, the 357-residue chain is Glycerol-3-phosphate dehydrogenase [NAD(P)+] (357 aa).

NADPH is bound by residues S30, F31, R51, and K124. Sn-glycerol 3-phosphate-binding residues include K124 and G152. A156 serves as a coordination point for NADPH. Residues K207, D260, S270, R271, and N272 each coordinate sn-glycerol 3-phosphate. K207 functions as the Proton acceptor in the catalytic mechanism. Residue R271 participates in NADPH binding. E297 is an NADPH binding site.

It belongs to the NAD-dependent glycerol-3-phosphate dehydrogenase family.

It is found in the cytoplasm. The catalysed reaction is sn-glycerol 3-phosphate + NAD(+) = dihydroxyacetone phosphate + NADH + H(+). The enzyme catalyses sn-glycerol 3-phosphate + NADP(+) = dihydroxyacetone phosphate + NADPH + H(+). It participates in membrane lipid metabolism; glycerophospholipid metabolism. In terms of biological role, catalyzes the reduction of the glycolytic intermediate dihydroxyacetone phosphate (DHAP) to sn-glycerol 3-phosphate (G3P), the key precursor for phospholipid synthesis. The polypeptide is Glycerol-3-phosphate dehydrogenase [NAD(P)+] (Acinetobacter baylyi (strain ATCC 33305 / BD413 / ADP1)).